The sequence spans 444 residues: Phosphoglucosamine mutase (444 aa).

Residue S101 is the Phosphoserine intermediate of the active site. Positions 101, 240, 242, and 244 each coordinate Mg(2+). S101 carries the phosphoserine modification.

The protein belongs to the phosphohexose mutase family. It depends on Mg(2+) as a cofactor. In terms of processing, activated by phosphorylation.

It catalyses the reaction alpha-D-glucosamine 1-phosphate = D-glucosamine 6-phosphate. Catalyzes the conversion of glucosamine-6-phosphate to glucosamine-1-phosphate. The sequence is that of Phosphoglucosamine mutase from Photobacterium profundum (strain SS9).